A 189-amino-acid polypeptide reads, in one-letter code: UPF0301 protein PP_4995 (189 aa).

The protein belongs to the UPF0301 (AlgH) family.

The chain is UPF0301 protein PP_4995 from Pseudomonas putida (strain ATCC 47054 / DSM 6125 / CFBP 8728 / NCIMB 11950 / KT2440).